The sequence spans 162 residues: Anaerobic nitrite reductase NSHB2 (162 aa).

The 144-residue stretch at 16 to 159 (SFSEEQEALV…LVAAIKQEMK (144 aa)) folds into the Globin domain. A Homodimerization motif is present at residues 49–53 (EVAPS). Residues serine 59, lysine 73, histidine 77, arginine 100, threonine 104, and histidine 105 each contribute to the heme b site. The Homodimerization motif lies at 112-124 (DAHFEVTRFALLE).

This sequence belongs to the plant globin family. As to quaternary structure, homodimer. The cofactor is heme b. Mainly expressed in germinating seeds, seedlings, roots, flowers and leaves.

The protein resides in the cytoplasm. The protein localises to the nucleus. It catalyses the reaction Fe(III)-heme b-[protein] + nitric oxide + H2O = Fe(II)-heme b-[protein] + nitrite + 2 H(+). In terms of biological role, phytoglobin that reduces nitrite to nitric oxide under anoxic conditions (e.g. during flooding or in waterlogged soil). May not function as an oxygen storage or transport protein. Has an unusually high affinity for O(2) through an hexacoordinate heme iron because of a very low dissociation constant. Promotes tolerance to low potassium K(+) conditions. This is Anaerobic nitrite reductase NSHB2 from Oryza sativa subsp. indica (Rice).